Reading from the N-terminus, the 108-residue chain is NEYQTYLTDRNPQCILNEPLRTDTVSTPVSGNELLEAGKECDCGAPANPCCDAATCKLRPGEQCAEGLCCDQCRFMKEGTICQEAKGDWNDDTCTGQSADCPRNGFYG.

Residues 1 to 19 (NEYQTYLTDRNPQCILNEP) enclose the Peptidase M12B domain. Residues 20–35 (LRTDTVSTPVSGNELL) constitute a propeptide that is removed on maturation. The 82-residue stretch at 27–108 (TPVSGNELLE…ADCPRNGFYG (82 aa)) folds into the Disintegrin domain. 6 disulfides stabilise this stretch: Cys-41-Cys-56, Cys-43-Cys-51, Cys-50-Cys-73, Cys-64-Cys-70, Cys-69-Cys-94, and Cys-82-Cys-101. Positions 86–88 (KGD) match the Cell attachment site; atypical (KGD) motif.

The protein belongs to the venom metalloproteinase (M12B) family. P-II subfamily. P-IIa sub-subfamily. Monomeric (disintegrin). Requires Zn(2+) as cofactor. As to expression, expressed by the venom gland.

The protein localises to the secreted. Functionally, impairs hemostasis in the envenomed animal. Inhibits platelet aggregation induced by ADP, thrombin, platelet-activating factor and collagen. Acts by inhibiting fibrinogen interaction with platelet receptors GPIIb/GPIIIa (ITGA2B/ITGB3). This Gloydius brevicauda (Korean slamosa snake) protein is Zinc metalloproteinase/disintegrin.